Here is a 514-residue protein sequence, read N- to C-terminus: Tryptophan decarboxylase 1 (514 aa).

Serotonin is bound at residue Phe104. Pyridoxal 5'-phosphate contacts are provided by Thr175 and Ser176. His214 provides a ligand contact to serotonin. Thr273 contacts pyridoxal 5'-phosphate. At Lys330 the chain carries N6-(pyridoxal phosphate)lysine. The active-site Proton donor is Tyr359. Pyridoxal 5'-phosphate is bound by residues Val380 and Gly381.

This sequence belongs to the group II decarboxylase family. As to quaternary structure, forms homodimers. Pyridoxal 5'-phosphate is required as a cofactor.

It carries out the reaction L-tryptophan + H(+) = tryptamine + CO2. The catalysed reaction is 5-hydroxy-L-tryptophan + H(+) = serotonin + CO2. Functionally, involved in serotonin biosynthesis. Catalyzes the decarboxylation of L-tryptophan to produce tryptamine, which is converted to serotonin by tryptamine 5-hydroxylase. May play a major role in serotonin biosynthesis during senescence. Accumulation of serotonin attenuates leaf senescence. Catalyzes the decarboxylation of 5-hydroxy-L-tryptophan to produce serotonin. In Oryza sativa subsp. japonica (Rice), this protein is Tryptophan decarboxylase 1.